Here is a 551-residue protein sequence, read N- to C-terminus: Pyrroline-5-carboxylate reductase 1 (551 aa).

Residues 279-551 are disordered; sequence LYTQKQQNKK…RHEVKTEQIN (273 aa). 7 stretches are compositionally biased toward low complexity: residues 282–298, 306–342, 383–415, 424–441, 448–475, 487–496, and 503–520; these read QKQQ…QQHQ, QQHQ…YGHQ, QQYQ…SNQR, KSPQ…QPSS, QQQQ…QQQP, QQQQPQQQQQ, and YNNN…NNYN. Basic and acidic residues predominate over residues 537-551; sequence YHDEKRHEVKTEQIN.

This sequence belongs to the pyrroline-5-carboxylate reductase family. In terms of assembly, homodecamer; composed of 5 homodimers.

It carries out the reaction L-proline + NADP(+) = (S)-1-pyrroline-5-carboxylate + NADPH + 2 H(+). The enzyme catalyses L-proline + NAD(+) = (S)-1-pyrroline-5-carboxylate + NADH + 2 H(+). It functions in the pathway amino-acid biosynthesis; L-proline biosynthesis; L-proline from L-glutamate 5-semialdehyde: step 1/1. This chain is Pyrroline-5-carboxylate reductase 1 (pycr1), found in Dictyostelium discoideum (Social amoeba).